Consider the following 313-residue polypeptide: WD repeat-containing protein 82-B (313 aa).

6 WD repeats span residues 19–58, 105–144, 146–184, 192–231, 236–276, and 280–313; these read ENSD…PKRT, GHSK…CQGL, HLQG…KGPF, DRTC…VMHT, NNSK…KVAV, and KHTG…TIDD.

The protein belongs to the WD repeat SWD2 family. As to quaternary structure, component of the SET1/COMPASS complex. Component of the PNUTS-PP1 phosphatase complex.

The protein resides in the nucleus. It is found in the chromosome. Its subcellular location is the cytoplasm. Regulatory component of the SET1/COMPASS complex implicated in the tethering of this complex to transcriptional start sites of active genes. Facilitates histone H3 'Lys-4' methylation (H3K4me) via recruitment of the SETD1A or SETD1B to the 'Ser-5' phosphorylated C-terminal domain (CTD) of RNA polymerase II large subunit (POLR2A). Component of the PNUTS-PP1 protein phosphatase complex, a protein phosphatase 1 (PP1) complex that promotes RNA polymerase II transcription pause-release, allowing transcription elongation. This is WD repeat-containing protein 82-B (wdr82-b) from Xenopus laevis (African clawed frog).